Reading from the N-terminus, the 327-residue chain is Cytochrome f (327 aa).

An N-terminal signal peptide occupies residues 1 to 24; it reads MKRIGLVFCALLLLLGMGARPAAA. Residues Tyr25, Cys45, Cys48, and His49 each coordinate heme. A helical transmembrane segment spans residues 293 to 313; it reads VKWLVAFLAAITITQVLLVLK.

This sequence belongs to the cytochrome f family. As to quaternary structure, the 4 large subunits of the cytochrome b6-f complex are cytochrome b6, subunit IV (17 kDa polypeptide, PetD), cytochrome f and the Rieske protein, while the 4 small subunits are PetG, PetL, PetM and PetN. The complex functions as a dimer. The cofactor is heme.

The protein localises to the cellular thylakoid membrane. Functionally, component of the cytochrome b6-f complex, which mediates electron transfer between photosystem II (PSII) and photosystem I (PSI), cyclic electron flow around PSI, and state transitions. The chain is Cytochrome f from Synechococcus sp. (strain JA-2-3B'a(2-13)) (Cyanobacteria bacterium Yellowstone B-Prime).